The sequence spans 505 residues: Monocarboxylate transporter 10 (505 aa).

Residues 1-14 (MTEPEPTLEQEPTP) are compositionally biased toward acidic residues. The interval 1–64 (MTEPEPTLEQ…EQKSPEEFEP (64 aa)) is disordered. Residues 1–66 (MTEPEPTLEQ…KSPEEFEPPE (66 aa)) lie on the Cytoplasmic side of the membrane. Over residues 15-31 (EPEPTQEPTPEPTPEPE) the composition is skewed to pro residues. Over residues 32-41 (PTQEPESEPE) the composition is skewed to acidic residues. Residues 67-87 (GGWGWVVMLASMWCNGSVFGI) traverse the membrane as a helical segment. Over 88-114 (QNAFGIMFVYLLNEFGSEHDADLRFKT) the chain is Extracellular. A helical transmembrane segment spans residues 115–135 (AWVGSLSMGMIFFCSPIVSVF). Residues 136-142 (TDLLGCR) lie on the Cytoplasmic side of the membrane. A helical membrane pass occupies residues 143-163 (ITAVGGAAVGCVGLLASSFVT). Over 164-171 (SLGPMYFT) the chain is Extracellular. The helical transmembrane segment at 172–192 (YGIVFACGCSFAYQPSLVILG) threads the bilayer. Residues 193 to 204 (HYFKRRLGLVNG) are Cytoplasmic-facing. Residues 205–225 (IVTAGSSVFTITLPYMLSGLL) traverse the membrane as a helical segment. Topologically, residues 226 to 235 (KSVGLYHTLR) are extracellular. The helical transmembrane segment at 236–256 (VLAIFMFILMLAGLTYKPLLP) threads the bilayer. Residues 257–286 (KPVSSSKPGSRCPPLSRIFNVNIWKSLGYR) lie on the Cytoplasmic side of the membrane. A helical transmembrane segment spans residues 287–307 (IWAFGIPAALYGYFVPYVHLM). The Extracellular segment spans residues 308 to 321 (THVEERFGPEANKE). A helical transmembrane segment spans residues 322–342 (VLLACIGITSGVGRLIFGRVA). Position 343 (aspartate 343) is a topological domain, cytoplasmic. A helical transmembrane segment spans residues 344 to 364 (YVPGVNKVFLQVSSFMVIGVM). Topologically, residues 365-377 (SMMIPLCHVFGGL) are extracellular. A helical transmembrane segment spans residues 378-400 (IAVCLLMGLFDGCFICIMAPIAF). Over 401-411 (ELVGSQNVSQA) the chain is Cytoplasmic. Residues 412-432 (IGFLLGMMSIPMTVGPPIAGF) form a helical membrane-spanning segment. Over 433–443 (LRDRLGSYDVA) the chain is Extracellular. A helical transmembrane segment spans residues 444–464 (FYLAGIPPLIGGAVLCAIPWV). The Cytoplasmic portion of the chain corresponds to 465 to 505 (EARRKRREAANTAENTEKMLESRSPPLEDTVCRTEEPESVI). The tract at residues 474–505 (ANTAENTEKMLESRSPPLEDTVCRTEEPESVI) is disordered. A compositionally biased stretch (basic and acidic residues) spans 494–505 (TVCRTEEPESVI).

Belongs to the major facilitator superfamily. Monocarboxylate porter (TC 2.A.1.13) family.

Its subcellular location is the cell membrane. It is found in the basolateral cell membrane. It carries out the reaction L-tryptophan(in) = L-tryptophan(out). It catalyses the reaction L-tyrosine(in) = L-tyrosine(out). The enzyme catalyses L-phenylalanine(in) = L-phenylalanine(out). The catalysed reaction is 3,3',5-triiodo-L-thyronine(out) = 3,3',5-triiodo-L-thyronine(in). It carries out the reaction L-thyroxine(out) = L-thyroxine(in). Sodium- and proton-independent thyroid hormones and aromatic acids transporter. Mediates both uptake and efflux of 3,5,3'-triiodothyronine (T3) and 3,5,3',5'-tetraiodothyronine (T4) with high affinity, suggesting a role in the homeostasis of thyroid hormone levels. Responsible for low affinity bidirectional transport of the aromatic amino acids, such as phenylalanine, tyrosine, tryptophan and L-3,4-dihydroxyphenylalanine (L-dopa). Plays an important role in homeostasis of aromatic amino acids. This Danio rerio (Zebrafish) protein is Monocarboxylate transporter 10 (slc16a10).